The sequence spans 65 residues: Large ribosomal subunit protein bL35 (65 aa).

The span at 1–15 shows a compositional bias: basic residues; it reads MPKMKTKKSASKRFT. Positions 1-27 are disordered; sequence MPKMKTKKSASKRFTARPNGSFKRGQA.

This sequence belongs to the bacterial ribosomal protein bL35 family.

The sequence is that of Large ribosomal subunit protein bL35 from Cupriavidus pinatubonensis (strain JMP 134 / LMG 1197) (Cupriavidus necator (strain JMP 134)).